Here is an 87-residue protein sequence, read N- to C-terminus: Large ribosomal subunit protein bL31B (87 aa).

The protein belongs to the bacterial ribosomal protein bL31 family. Type B subfamily. Part of the 50S ribosomal subunit.

This Latilactobacillus sakei subsp. sakei (strain 23K) (Lactobacillus sakei subsp. sakei) protein is Large ribosomal subunit protein bL31B.